We begin with the raw amino-acid sequence, 142 residues long: Large ribosomal subunit protein uL13 (142 aa).

This sequence belongs to the universal ribosomal protein uL13 family. Part of the 50S ribosomal subunit.

This protein is one of the early assembly proteins of the 50S ribosomal subunit, although it is not seen to bind rRNA by itself. It is important during the early stages of 50S assembly. The sequence is that of Large ribosomal subunit protein uL13 from Pseudomonas fluorescens (strain ATCC BAA-477 / NRRL B-23932 / Pf-5).